A 197-amino-acid polypeptide reads, in one-letter code: dITP/XTP pyrophosphatase (197 aa).

A substrate-binding site is contributed by 8-13 (TGNPGK). Mg(2+) is bound by residues E40 and D69. Catalysis depends on D69, which acts as the Proton acceptor. Substrate-binding positions include S70, 154-157 (FGYD), K177, and 182-183 (HR).

The protein belongs to the HAM1 NTPase family. As to quaternary structure, homodimer. It depends on Mg(2+) as a cofactor.

The enzyme catalyses XTP + H2O = XMP + diphosphate + H(+). The catalysed reaction is dITP + H2O = dIMP + diphosphate + H(+). It carries out the reaction ITP + H2O = IMP + diphosphate + H(+). Functionally, pyrophosphatase that catalyzes the hydrolysis of nucleoside triphosphates to their monophosphate derivatives, with a high preference for the non-canonical purine nucleotides XTP (xanthosine triphosphate), dITP (deoxyinosine triphosphate) and ITP. Seems to function as a house-cleaning enzyme that removes non-canonical purine nucleotides from the nucleotide pool, thus preventing their incorporation into DNA/RNA and avoiding chromosomal lesions. The sequence is that of dITP/XTP pyrophosphatase from Pectobacterium atrosepticum (strain SCRI 1043 / ATCC BAA-672) (Erwinia carotovora subsp. atroseptica).